We begin with the raw amino-acid sequence, 332 residues long: Methionine import ATP-binding protein MetN (332 aa).

Positions 2–239 constitute an ABC transporter domain; sequence ITFQDVSKTY…PASDTARRFV (238 aa). 36–43 serves as a coordination point for ATP; sequence GASGAGKS.

Belongs to the ABC transporter superfamily. Methionine importer (TC 3.A.1.24) family. The complex is composed of two ATP-binding proteins (MetN), two transmembrane proteins (MetI) and a solute-binding protein (MetQ).

The protein resides in the cell inner membrane. The enzyme catalyses L-methionine(out) + ATP + H2O = L-methionine(in) + ADP + phosphate + H(+). The catalysed reaction is D-methionine(out) + ATP + H2O = D-methionine(in) + ADP + phosphate + H(+). Its function is as follows. Part of the ABC transporter complex MetNIQ involved in methionine import. Responsible for energy coupling to the transport system. The chain is Methionine import ATP-binding protein MetN from Caulobacter vibrioides (strain ATCC 19089 / CIP 103742 / CB 15) (Caulobacter crescentus).